We begin with the raw amino-acid sequence, 930 residues long: Isoleucine--tRNA ligase (930 aa).

Positions 57–67 (PYANGNIHVGH) match the 'HIGH' region motif. Glutamate 554 is a binding site for L-isoleucyl-5'-AMP. The 'KMSKS' region signature appears at 595-599 (KMSKS). Lysine 598 is an ATP binding site. Zn(2+) is bound by residues cysteine 888, cysteine 891, cysteine 908, and cysteine 911.

This sequence belongs to the class-I aminoacyl-tRNA synthetase family. IleS type 1 subfamily. As to quaternary structure, monomer. Zn(2+) is required as a cofactor.

It localises to the cytoplasm. The catalysed reaction is tRNA(Ile) + L-isoleucine + ATP = L-isoleucyl-tRNA(Ile) + AMP + diphosphate. Functionally, catalyzes the attachment of isoleucine to tRNA(Ile). As IleRS can inadvertently accommodate and process structurally similar amino acids such as valine, to avoid such errors it has two additional distinct tRNA(Ile)-dependent editing activities. One activity is designated as 'pretransfer' editing and involves the hydrolysis of activated Val-AMP. The other activity is designated 'posttransfer' editing and involves deacylation of mischarged Val-tRNA(Ile). In Streptococcus mutans serotype c (strain ATCC 700610 / UA159), this protein is Isoleucine--tRNA ligase.